Here is a 399-residue protein sequence, read N- to C-terminus: Elongation factor Tu 2 (399 aa).

The region spanning 10–209 (KPHVNIGTIG…QVDGYIPEPE (200 aa)) is the tr-type G domain. Residues 19–26 (GHVDHGKT) form a G1 region. 19 to 26 (GHVDHGKT) is a GTP binding site. A Mg(2+)-binding site is contributed by T26. The tract at residues 60-64 (GITIA) is G2. The G3 stretch occupies residues 81 to 84 (DCPG). GTP is bound by residues 81–85 (DCPGH) and 136–139 (NKAD). Residues 136-139 (NKAD) are G4. A G5 region spans residues 174–176 (SAL).

This sequence belongs to the TRAFAC class translation factor GTPase superfamily. Classic translation factor GTPase family. EF-Tu/EF-1A subfamily. In terms of assembly, monomer.

The protein resides in the cytoplasm. The catalysed reaction is GTP + H2O = GDP + phosphate + H(+). GTP hydrolase that promotes the GTP-dependent binding of aminoacyl-tRNA to the A-site of ribosomes during protein biosynthesis. This is Elongation factor Tu 2 from Syntrophotalea carbinolica (strain DSM 2380 / NBRC 103641 / GraBd1) (Pelobacter carbinolicus).